A 69-amino-acid chain; its full sequence is MFGLGGQELILILLIILLLFGAKKLPELAKGLGRGMKEFKKAQTEIEEEFNNAIEDTPAQKKETIKDKE.

The helical transmembrane segment at M1–G21 threads the bilayer.

It belongs to the TatA/E family. Forms a complex with TatC.

The protein resides in the cell inner membrane. Its function is as follows. Part of the twin-arginine translocation (Tat) system that transports large folded proteins containing a characteristic twin-arginine motif in their signal peptide across membranes. TatA could form the protein-conducting channel of the Tat system. In Chlorobium phaeovibrioides (strain DSM 265 / 1930) (Prosthecochloris vibrioformis (strain DSM 265)), this protein is Sec-independent protein translocase protein TatA.